A 2544-amino-acid chain; its full sequence is DNA polymerase theta (2544 aa).

The span at Met-1 to Ser-13 shows a compositional bias: basic residues. Residues Met-1 to Lys-57 form a disordered region. A compositionally biased stretch (low complexity) spans Ser-14–Ser-29. ATP-binding positions include Gln-95 and Ala-114–Thr-121. Residues Leu-101–Asp-285 form the Helicase ATP-binding domain. Residues Leu-101–Ala-551 are helicase activity. Residues Asp-215–His-218 carry the DEAH box motif. Residues Gly-320 to Ala-551 form the Helicase C-terminal domain. An interaction with RAD51 region spans residues Asp-844–Met-890. Residues Pro-896 to Asp-955 form a disordered region. Over residues Ser-898–Ser-911 the composition is skewed to low complexity. Residues Gly-933–Lys-945 show a composition bias toward polar residues. Residues Pro-946–Asp-955 are compositionally biased toward basic and acidic residues. Lys-983 is modified (N6-acetyllysine). The segment covering Leu-1022–Pro-1034 has biased composition (polar residues). 2 disordered regions span residues Leu-1022 to Arg-1058 and Val-1128 to Leu-1167. Low complexity predominate over residues Val-1128–Ala-1139. Over residues Ala-1140–Asn-1155 the composition is skewed to basic and acidic residues. Ser-1265 bears the Phosphoserine mark. 2 disordered regions span residues Gly-1266 to Ala-1288 and Gln-1331 to Asp-1353. 4 positions are modified to phosphoserine: Ser-1438, Ser-1442, Ser-1444, and Ser-1449. The tract at residues Phe-1478 to Gln-1501 is disordered. The span at Pro-1492–Gln-1501 shows a compositional bias: polar residues. Ser-1511, Ser-1519, Ser-1585, and Ser-1592 each carry phosphoserine. The disordered stretch occupies residues Glu-1557–Ala-1591. A compositionally biased stretch (polar residues) spans Thr-1578 to Ala-1591. Basic and acidic residues-rich tracts occupy residues Val-1606 to Lys-1616 and Asn-1628 to Ile-1638. Residues Val-1606 to Ala-1697 are disordered. The segment covering Asp-1641–Pro-1652 has biased composition (polar residues). Over residues Val-1656–Ala-1667 the composition is skewed to basic and acidic residues. Position 1710 is a phosphothreonine (Thr-1710). The DNA polymerase activity stretch occupies residues Ala-2052 to Glu-2538. 2 loop regions span residues Lys-2097–Phe-2132 and Glu-2212–Pro-2276. The segment covering Met-2104–Arg-2117 has biased composition (polar residues). Positions Met-2104–Arg-2124 are disordered. Catalysis depends on Asp-2284, which acts as the For DNA polymerase activity. 2 residues coordinate Mg(2+): Asp-2284 and Tyr-2285. Positions Gln-2445–Ile-2489 are loop 3. Asp-2494 lines the Mg(2+) pocket.

Belongs to the DNA polymerase type-A family. As to quaternary structure, homomultimer; forms homodimers and homotetramers. Interacts with RAD51. Interacts with ORC2 and ORC4. Interacts with RHNO1; interaction takes place during mitosis and promotes POLQ recruitment to DNA damage sites. Interacts (when phosphorylated) with TOPBP1 (via BRCT domains 7 and 8); promoting POLQ recruitment to DNA damage sites. Mg(2+) serves as cofactor. Post-translationally, phosphorylated by PLK1; promoting interaction with TOPBP1 and recruitment to DNA damage sites.

It is found in the nucleus. The protein localises to the chromosome. It carries out the reaction DNA(n) + a 2'-deoxyribonucleoside 5'-triphosphate = DNA(n+1) + diphosphate. The enzyme catalyses ATP + H2O = ADP + phosphate + H(+). In terms of biological role, low-fidelity DNA polymerase with a helicase activity that promotes microhomology-mediated end-joining (MMEJ), an alternative non-homologous end-joining (NHEJ) machinery required to repair double-strand breaks in DNA during mitosis. MMEJ is an error-prone repair pathway that produces deletions of sequences from the strand being repaired and promotes genomic rearrangements, such as telomere fusions, some of them leading to cellular transformation. MMEJ is required during mitosis to repair persistent double-strand breaks that originate in S-phase. Although error-prone, MMEJ protects against chromosomal instability and tumorigenesis. The polymerase acts by binding directly the 2 ends of resected double-strand breaks, allowing microhomologous sequences in the overhangs to form base pairs. It then extends each strand from the base-paired region using the opposing overhang as a template. Requires partially resected DNA containing 2 to 6 base pairs of microhomology to perform MMEJ. The polymerase lacks proofreading activity and is highly promiscuous: unlike most polymerases, promotes extension of ssDNA and partial ssDNA (pssDNA) substrates. When the ends of a break do not contain terminal microhomology must identify embedded complementary sequences through a scanning step. Also acts as a DNA helicase, promoting dissociation of the replication protein A complex (RPA/RP-A), composed of RPA1, RPA2 and RPA3, from resected double-strand breaks to allow their annealing and subsequent joining by MMEJ. Removal of RPA/RP-A complex proteins prevents RAD51 accumulation at resected ends, thereby inhibiting homology-recombination repair (HR) pathway. Also shows RNA-directed DNA polymerase activity to mediate DNA repair in vitro; however this activity needs additional evidence in vivo. May also have lyase activity. Involved in somatic hypermutation of immunoglobulin genes, a process that requires the activity of DNA polymerases to ultimately introduce mutations at both A/T and C/G base pairs. However, POLQ does not play a major role in somatic hypermutation. POLQ-mediated end joining activity is involved in random integration of exogenous DNA hampers. The polypeptide is DNA polymerase theta (Mus musculus (Mouse)).